A 312-amino-acid chain; its full sequence is MIEIKHLRTLQALKNNGSLSAAAIQLHQTQSAISHQFNELEKKLGFKLFIRKSNPIKFTAQGEILLQLSKEILPKIHKAIQNCKKTHQMIIKLAIECHSCIQWLTPALKIFQKKWPRVEIDFYSDMIFSPQPSLQQGKLDIVLTSEVLPRSNLFYFPIFDFEVRLVLSPNHPLAQKKHNILPEDLISEILMIYPVKRDKLDIWKFFLQPAGIIPIFKNVNNTLLLIQMVAAKMGITALPHWVVDTFEKQGLVVTKKLGDGIWKRLYAAIRDGDQKELIIKNFIYAIRLHVCTHLKFIRDTQKPHFFKNVKNI.

In terms of domain architecture, HTH lysR-type spans 1–59; the sequence is MIEIKHLRTLQALKNNGSLSAAAIQLHQTQSAISHQFNELEKKLGFKLFIRKSNPIKFT. The H-T-H motif DNA-binding region spans 19–38; that stretch reads LSAAAIQLHQTQSAISHQFN.

This sequence belongs to the LysR transcriptional regulatory family.

The protein resides in the cytoplasm. In terms of biological role, control of the last step in methionine biosynthesis; MetR is a positive activator of the metA, metE and metH genes. In Buchnera aphidicola subsp. Schizaphis graminum (strain Sg), this protein is HTH-type transcriptional regulator MetR (metR).